The chain runs to 208 residues: Large ribosomal subunit protein uL4 (208 aa).

Positions 45–89 (RQGTHAHKNRSAVSGGGKKPWRQKGTGRARQGSTRSPQWRGGGTV) are disordered.

This sequence belongs to the universal ribosomal protein uL4 family. Part of the 50S ribosomal subunit.

One of the primary rRNA binding proteins, this protein initially binds near the 5'-end of the 23S rRNA. It is important during the early stages of 50S assembly. It makes multiple contacts with different domains of the 23S rRNA in the assembled 50S subunit and ribosome. Functionally, forms part of the polypeptide exit tunnel. The sequence is that of Large ribosomal subunit protein uL4 from Lactococcus lactis subsp. cremoris (strain MG1363).